The primary structure comprises 407 residues: Serine/threonine transporter SstT (407 aa).

The next 9 helical transmembrane spans lie at glycine 14–serine 34, phenylalanine 48–isoleucine 68, isoleucine 82–phenylalanine 102, alanine 141–leucine 161, isoleucine 192–glycine 212, leucine 218–phenylalanine 238, isoleucine 290–leucine 310, methionine 316–alanine 336, and valine 363–threonine 383.

It belongs to the dicarboxylate/amino acid:cation symporter (DAACS) (TC 2.A.23) family.

The protein resides in the cell inner membrane. It catalyses the reaction L-serine(in) + Na(+)(in) = L-serine(out) + Na(+)(out). The enzyme catalyses L-threonine(in) + Na(+)(in) = L-threonine(out) + Na(+)(out). Its function is as follows. Involved in the import of serine and threonine into the cell, with the concomitant import of sodium (symport system). The protein is Serine/threonine transporter SstT of Shewanella pealeana (strain ATCC 700345 / ANG-SQ1).